We begin with the raw amino-acid sequence, 1008 residues long: MASITFGNACTVVFGQVRKEEVTAGPVAVNLNEGTRMVVVPTAAQMATPTPSVSIKIINRWSNKAVSSYERQVEDVFANFFAKKERSDELLTRYYGKVVQKGNKLMVKRAPLHVARVLEKQRLQDIEDEKAFLQYRDAGVHVAGSVKFTDTRSRGQTVSFRTEHYKPTGKIVQKKKAQKQRANADVDHLIDEVMKICSADCKQVEFISMGKRRLTAKFKLFGKSVIPCIHLAHEQGRRLRRELDPRIHEQVIAHLVTGRKVRELIKDDMVTYGWSGAILNKNLFKRTPFRWDEVVIRGRLYGKLVDARSKLSECSKDKIHQYSSFEAQFWKGWKNKFDTLHPHNKDHICEPTINNEKCGEIVATIFQAIHPVIKVSCSTCRERLTKASNEELNEYLATNLACHKATFDDMRQQHATVNTVLNKIEQTSLANPNLKDSMEIVRLLQNLNQTQARQLMKVNNTLLKGNVATSEEFSDATTQLLEVTRWYAKHLSLVDEGSISSFRNKATSKSLINPSLLCDNQLDRNGNFVWGERGRHSKRFFENFFEEVVPGGGYKKYQIRNSPNCTRKLAIGNLIVPMSLERARNALIGESVERLPVTEACVSRVNGAFMHVASCVTSDNGSAHFSPLYSPTKRHLVVGTTGDSKYIDLPATESDKMYVAKEGYCYINIFLAMLVNVNEDSAKDFTKMIRDTIVPMLGTWPSMMDVATACYILTVFHPETKSAELPRILVDHTNKTMHVIDSFGSISTGYHILKAGTVSQLIHFASNELVSEMKHYVVGGEAPHARRMRMEKALIQGIFKPKQLVYLIEEDPYILMMSLVSPTLLINLFNVGGLEVAMKHWIKKEMNIGLIFSMLSSLAQKVSRADLVNEQITMIDANAAQFIETLAGIDVENPMRNELVSALTMMLARSDVDSTLNKTGFTGFSDTLLEMREKNYWRRAQQGMVRAKLVGKIFFNHFLEASAKAYYGTFAKHKATRYRRQVCNLMYLVTWKDQGPIQWSKKCNIRSV.

The region spanning 180–322 (QRANADVDHL…ECSKDKIHQY (143 aa)) is the Peptidase S30 domain. Catalysis depends on for P1 proteinase activity residues H233, E242, and S275. The short motif at 374 to 377 (KVSC) is the Involved in interaction with stylet and aphid transmission element. The Involved in virions binding and aphid transmission signature appears at 631-633 (PTK). In terms of domain architecture, Peptidase C6 spans 657-779 (MYVAKEGYCY…VSEMKHYVVG (123 aa)). Active-site for helper component proteinase activity residues include C665 and H738.

It belongs to the potyviridae P3N-PIPO polyprotein family. Interacts (via PIPO domain) with host PCaP1 protein; this interaction may help to anchor the movement complex to the plasma membrane from which the complex could move to the plasmodesmata. Post-translationally, potyviral RNA is expressed as two polyproteins which undergo post-translational proteolytic processing. Genome polyprotein is processed by NIa-pro, P1 and HC-pro proteinases resulting in the production of at least ten individual proteins. P3N-PIPO is cleaved by P1 and HC-pro proteinases resulting in the production of three individual proteins. The P1 proteinase and the HC-pro cleave only their respective C-termini autocatalytically.

It is found in the host cell junction. Its subcellular location is the host plasmodesma. The catalysed reaction is Hydrolyzes a Gly-|-Gly bond at its own C-terminus, commonly in the sequence -Tyr-Xaa-Val-Gly-|-Gly, in the processing of the potyviral polyprotein.. Functionally, required for aphid transmission and also has proteolytic activity. Only cleaves a Gly-Gly dipeptide at its own C-terminus. Interacts with virions and aphid stylets. Acts as a suppressor of RNA-mediated gene silencing, also known as post-transcriptional gene silencing (PTGS), a mechanism of plant viral defense that limits the accumulation of viral RNAs. May have RNA-binding activity. Its function is as follows. Allows efficient cell to cell propagation, by bypassing the host cell wall barrier. Transports viral genome to neighboring plant cells directly through plasmosdesmata, without any budding. The sequence is that of P3N-PIPO polyprotein from Peanut mottle virus (strain M).